A 148-amino-acid chain; its full sequence is Hemoglobin subunit beta (148 aa).

The region spanning 3-148 (DWTDAERSAI…VVSALGRQYH (146 aa)) is the Globin domain. 2 residues coordinate heme b: H64 and H93.

The protein belongs to the globin family. In terms of assembly, heterotetramer of two alpha chains and two beta chains. As to expression, red blood cells.

Its function is as follows. Involved in oxygen transport from gills to the various peripheral tissues. In Salmo salar (Atlantic salmon), this protein is Hemoglobin subunit beta (hbb).